The sequence spans 437 residues: Phosphoribosylamine--glycine ligase (437 aa).

One can recognise an ATP-grasp domain in the interval lysine 110–aspartate 322. Glutamate 142 to serine 203 serves as a coordination point for ATP. Mg(2+) is bound by residues glutamate 292 and asparagine 294.

Belongs to the GARS family. Requires Mg(2+) as cofactor. Mn(2+) is required as a cofactor.

The catalysed reaction is 5-phospho-beta-D-ribosylamine + glycine + ATP = N(1)-(5-phospho-beta-D-ribosyl)glycinamide + ADP + phosphate + H(+). The protein operates within purine metabolism; IMP biosynthesis via de novo pathway; N(1)-(5-phospho-D-ribosyl)glycinamide from 5-phospho-alpha-D-ribose 1-diphosphate: step 2/2. The polypeptide is Phosphoribosylamine--glycine ligase (Rhodopirellula baltica (strain DSM 10527 / NCIMB 13988 / SH1)).